The sequence spans 370 residues: Anthranilate phosphoribosyltransferase (370 aa).

Residues G82, 85–86 (GD), T90, 92–95 (NVST), 110–118 (KHGNRAATS), and S122 each bind 5-phospho-alpha-D-ribose 1-diphosphate. An anthranilate-binding site is contributed by G82. Residue S94 participates in Mg(2+) binding. N113 contacts anthranilate. Residue R168 participates in anthranilate binding. Residues D226 and E227 each coordinate Mg(2+).

It belongs to the anthranilate phosphoribosyltransferase family. As to quaternary structure, homodimer. Requires Mg(2+) as cofactor.

It carries out the reaction N-(5-phospho-beta-D-ribosyl)anthranilate + diphosphate = 5-phospho-alpha-D-ribose 1-diphosphate + anthranilate. It functions in the pathway amino-acid biosynthesis; L-tryptophan biosynthesis; L-tryptophan from chorismate: step 2/5. Catalyzes the transfer of the phosphoribosyl group of 5-phosphorylribose-1-pyrophosphate (PRPP) to anthranilate to yield N-(5'-phosphoribosyl)-anthranilate (PRA). The protein is Anthranilate phosphoribosyltransferase of Methanosarcina mazei (strain ATCC BAA-159 / DSM 3647 / Goe1 / Go1 / JCM 11833 / OCM 88) (Methanosarcina frisia).